The chain runs to 340 residues: Phenylalanine--tRNA ligase alpha subunit (340 aa).

Glu255 contributes to the Mg(2+) binding site.

This sequence belongs to the class-II aminoacyl-tRNA synthetase family. Phe-tRNA synthetase alpha subunit type 1 subfamily. As to quaternary structure, tetramer of two alpha and two beta subunits. The cofactor is Mg(2+).

The protein resides in the cytoplasm. It carries out the reaction tRNA(Phe) + L-phenylalanine + ATP = L-phenylalanyl-tRNA(Phe) + AMP + diphosphate + H(+). This is Phenylalanine--tRNA ligase alpha subunit from Heliobacterium modesticaldum (strain ATCC 51547 / Ice1).